The primary structure comprises 127 residues: MSIPNNLRYSEEHEWVKTEGNEVVIGITHFAQGELGDIVFVELPEVGATIEANEPFGSVESVKTVSELYAPVSGKVVAVNEELSDQPELVNESPYEGAWMVKVELSDASQVEKLLTAEKYAEMTNQD.

A Lipoyl-binding domain is found at 22–104 (EVVIGITHFA…YEGAWMVKVE (83 aa)). Position 63 is an N6-lipoyllysine (Lys63).

This sequence belongs to the GcvH family. In terms of assembly, the glycine cleavage system is composed of four proteins: P, T, L and H. Requires (R)-lipoate as cofactor.

The glycine cleavage system catalyzes the degradation of glycine. The H protein shuttles the methylamine group of glycine from the P protein to the T protein. In terms of biological role, is also involved in protein lipoylation via its role as an octanoyl/lipoyl carrier protein intermediate. The sequence is that of Glycine cleavage system H protein from Bacillus cereus (strain B4264).